A 267-amino-acid polypeptide reads, in one-letter code: Dihydropteroate synthase (267 aa).

The Pterin-binding domain occupies M1–Q251. Residue N11 coordinates Mg(2+). (7,8-dihydropterin-6-yl)methyl diphosphate is bound by residues T51, D84, N103, D167, K203, and R239–H241.

This sequence belongs to the DHPS family. The cofactor is Mg(2+).

The catalysed reaction is (7,8-dihydropterin-6-yl)methyl diphosphate + 4-aminobenzoate = 7,8-dihydropteroate + diphosphate. It functions in the pathway cofactor biosynthesis; tetrahydrofolate biosynthesis; 7,8-dihydrofolate from 2-amino-4-hydroxy-6-hydroxymethyl-7,8-dihydropteridine diphosphate and 4-aminobenzoate: step 1/2. Functionally, catalyzes the condensation of para-aminobenzoate (pABA) with 6-hydroxymethyl-7,8-dihydropterin diphosphate (DHPt-PP) to form 7,8-dihydropteroate (H2Pte), the immediate precursor of folate derivatives. The chain is Dihydropteroate synthase (folP) from Staphylococcus haemolyticus.